Here is a 135-residue protein sequence, read N- to C-terminus: Phosphoribosyl-AMP cyclohydrolase (135 aa).

Aspartate 78 provides a ligand contact to Mg(2+). Zn(2+) is bound at residue cysteine 79. Mg(2+)-binding residues include aspartate 80 and aspartate 82. 2 residues coordinate Zn(2+): cysteine 96 and cysteine 103.

It belongs to the PRA-CH family. Homodimer. Mg(2+) serves as cofactor. Requires Zn(2+) as cofactor.

Its subcellular location is the cytoplasm. It catalyses the reaction 1-(5-phospho-beta-D-ribosyl)-5'-AMP + H2O = 1-(5-phospho-beta-D-ribosyl)-5-[(5-phospho-beta-D-ribosylamino)methylideneamino]imidazole-4-carboxamide. It functions in the pathway amino-acid biosynthesis; L-histidine biosynthesis; L-histidine from 5-phospho-alpha-D-ribose 1-diphosphate: step 3/9. Its function is as follows. Catalyzes the hydrolysis of the adenine ring of phosphoribosyl-AMP. The protein is Phosphoribosyl-AMP cyclohydrolase of Cupriavidus metallidurans (strain ATCC 43123 / DSM 2839 / NBRC 102507 / CH34) (Ralstonia metallidurans).